Here is a 597-residue protein sequence, read N- to C-terminus: Elongation factor 4 (597 aa).

The 183-residue stretch at 2–184 folds into the tr-type G domain; it reads KHIRNFSIIA…NIVTAIPPPE (183 aa). Residues 14-19 and 131-134 each bind GTP; these read DHGKST and NKID.

It belongs to the TRAFAC class translation factor GTPase superfamily. Classic translation factor GTPase family. LepA subfamily.

The protein resides in the cell inner membrane. It carries out the reaction GTP + H2O = GDP + phosphate + H(+). Required for accurate and efficient protein synthesis under certain stress conditions. May act as a fidelity factor of the translation reaction, by catalyzing a one-codon backward translocation of tRNAs on improperly translocated ribosomes. Back-translocation proceeds from a post-translocation (POST) complex to a pre-translocation (PRE) complex, thus giving elongation factor G a second chance to translocate the tRNAs correctly. Binds to ribosomes in a GTP-dependent manner. This Vibrio atlanticus (strain LGP32) (Vibrio splendidus (strain Mel32)) protein is Elongation factor 4.